The following is a 269-amino-acid chain: Tryptophan synthase alpha chain (269 aa).

Residues Glu50 and Asp61 each act as proton acceptor in the active site.

Belongs to the TrpA family. In terms of assembly, tetramer of two alpha and two beta chains.

The catalysed reaction is (1S,2R)-1-C-(indol-3-yl)glycerol 3-phosphate + L-serine = D-glyceraldehyde 3-phosphate + L-tryptophan + H2O. It participates in amino-acid biosynthesis; L-tryptophan biosynthesis; L-tryptophan from chorismate: step 5/5. Functionally, the alpha subunit is responsible for the aldol cleavage of indoleglycerol phosphate to indole and glyceraldehyde 3-phosphate. The chain is Tryptophan synthase alpha chain from Francisella tularensis subsp. tularensis (strain FSC 198).